A 206-amino-acid chain; its full sequence is uncharacterized protein (206 aa).

The MurNAc-LAA domain maps to 32-201 (VYIDAGHGGE…AADAIVNGID (170 aa)).

This sequence belongs to the N-acetylmuramoyl-L-alanine amidase 3 family.

This is an uncharacterized protein from Bacillus subtilis (strain 168).